Consider the following 454-residue polypeptide: tRNA modification GTPase MnmE (454 aa).

(6S)-5-formyl-5,6,7,8-tetrahydrofolate-binding residues include R23, E80, and K120. Residues 216–377 form the TrmE-type G domain; the sequence is GMKVVIAGRP…LRNHLKQSMG (162 aa). Residue N226 participates in K(+) binding. Residues 226–231, 245–251, 270–273, 335–338, and 358–360 contribute to the GTP site; these read NAGKSS, TDIAGTT, DTAG, NKAD, and SAR. S230 is a binding site for Mg(2+). T245, I247, and T250 together coordinate K(+). T251 is a Mg(2+) binding site. A (6S)-5-formyl-5,6,7,8-tetrahydrofolate-binding site is contributed by K454.

This sequence belongs to the TRAFAC class TrmE-Era-EngA-EngB-Septin-like GTPase superfamily. TrmE GTPase family. In terms of assembly, homodimer. Heterotetramer of two MnmE and two MnmG subunits. It depends on K(+) as a cofactor.

The protein localises to the cytoplasm. Its function is as follows. Exhibits a very high intrinsic GTPase hydrolysis rate. Involved in the addition of a carboxymethylaminomethyl (cmnm) group at the wobble position (U34) of certain tRNAs, forming tRNA-cmnm(5)s(2)U34. This chain is tRNA modification GTPase MnmE, found in Salmonella paratyphi C (strain RKS4594).